A 198-amino-acid polypeptide reads, in one-letter code: Zinc finger protein 41 (198 aa).

The span at 1-12 (MEKPATRKKKSQ) shows a compositional bias: basic residues. Positions 1-56 (MEKPATRKKKSQAPKEEAGAQKATVKGEKTSKGKKATKKPRKPRRPRKEPVLSPED) are disordered. Over residues 13–31 (APKEEAGAQKATVKGEKTS) the composition is skewed to basic and acidic residues. Residues 32–47 (KGKKATKKPRKPRRPR) show a composition bias toward basic residues. C2H2-type zinc fingers lie at residues 87–109 (YECG…QRVH), 115–137 (FKCD…QRIH), 143–165 (FKCG…QKTH), and 171–193 (YGCE…RKRH).

This sequence belongs to the krueppel C2H2-type zinc-finger protein family. As to expression, predominantly in the spermatocytes and spermatids of testes. It is also expressed in the fetus and embryonic stem cells at lower levels.

The protein resides in the nucleus. Its function is as follows. A putative DNA-binding regulatory protein associated with meiosis in spermatogenesis. The polypeptide is Zinc finger protein 41 (Zfp41) (Mus musculus (Mouse)).